Here is a 246-residue protein sequence, read N- to C-terminus: MSRGSGAGYDRHITIFSPEGRLFQVEYAFKAVKAAGITSIGVRGKDSVCVVTQKKVPDKLLDQSSVSHLFPVTKYLGLLATGMTADSRSLVQQARNEAAEFRFQYGYEMPADILAKWIADKSQVYTQHAYMRPLGVVAMVLGIDEERGPLLYKCDPAGHFYGHKATSAGMKEQEAVNFLEKKMKENPAFTYDETVQTAISALQSVLQEDFKATEIEVGVVRADDPLFRSLRTEEIDEHLTAISERD.

This sequence belongs to the peptidase T1A family. As to quaternary structure, component of the 20S core complex of the 26S proteasome. The 26S proteasome is composed of a core protease (CP), known as the 20S proteasome, capped at one or both ends by the 19S regulatory particle (RP/PA700). The 20S proteasome core is composed of 28 subunits that are arranged in four stacked rings, resulting in a barrel-shaped structure. The two end rings are each formed by seven alpha subunits, and the two central rings are each formed by seven beta subunits. The catalytic chamber with the active sites is on the inside of the barrel.

It localises to the cytoplasm. Its subcellular location is the nucleus. The proteasome is a multicatalytic proteinase complex which is characterized by its ability to cleave peptides with Arg, Phe, Tyr, Leu, and Glu adjacent to the leaving group at neutral or slightly basic pH. The proteasome has an ATP-dependent proteolytic activity. The chain is Proteasome subunit alpha type-6-B (PAA2) from Arabidopsis thaliana (Mouse-ear cress).